A 948-amino-acid polypeptide reads, in one-letter code: Protein translocase subunit SecA (948 aa).

ATP is bound by residues Gln-91, 109 to 113 (GEGKT), and Asp-509.

The protein belongs to the SecA family. As to quaternary structure, monomer and homodimer. Part of the essential Sec protein translocation apparatus which comprises SecA, SecYEG and auxiliary proteins SecDF. Other proteins may also be involved.

The protein localises to the cell inner membrane. The protein resides in the cellular thylakoid membrane. It localises to the cytoplasm. The enzyme catalyses ATP + H2O + cellular proteinSide 1 = ADP + phosphate + cellular proteinSide 2.. Its function is as follows. Part of the Sec protein translocase complex. Interacts with the SecYEG preprotein conducting channel. Has a central role in coupling the hydrolysis of ATP to the transfer of proteins into and across the cell membrane, serving as an ATP-driven molecular motor driving the stepwise translocation of polypeptide chains across the membrane. In terms of biological role, probably participates in protein translocation into and across both the cytoplasmic and thylakoid membranes in cyanobacterial cells. This Synechococcus elongatus (strain ATCC 33912 / PCC 7942 / FACHB-805) (Anacystis nidulans R2) protein is Protein translocase subunit SecA.